An 876-amino-acid chain; its full sequence is Alanine--tRNA ligase (876 aa).

Zn(2+)-binding residues include His565, His569, Cys667, and His671.

Belongs to the class-II aminoacyl-tRNA synthetase family. The cofactor is Zn(2+).

The protein resides in the cytoplasm. It catalyses the reaction tRNA(Ala) + L-alanine + ATP = L-alanyl-tRNA(Ala) + AMP + diphosphate. In terms of biological role, catalyzes the attachment of alanine to tRNA(Ala) in a two-step reaction: alanine is first activated by ATP to form Ala-AMP and then transferred to the acceptor end of tRNA(Ala). Also edits incorrectly charged Ser-tRNA(Ala) and Gly-tRNA(Ala) via its editing domain. The polypeptide is Alanine--tRNA ligase (Staphylococcus aureus (strain USA300)).